We begin with the raw amino-acid sequence, 94 residues long: Co-chaperonin GroES (94 aa).

It belongs to the GroES chaperonin family. In terms of assembly, heptamer of 7 subunits arranged in a ring. Interacts with the chaperonin GroEL.

The protein resides in the cytoplasm. In terms of biological role, together with the chaperonin GroEL, plays an essential role in assisting protein folding. The GroEL-GroES system forms a nano-cage that allows encapsulation of the non-native substrate proteins and provides a physical environment optimized to promote and accelerate protein folding. GroES binds to the apical surface of the GroEL ring, thereby capping the opening of the GroEL channel. This Streptococcus pneumoniae (strain ATCC 700669 / Spain 23F-1) protein is Co-chaperonin GroES.